An 872-amino-acid chain; its full sequence is Valine--tRNA ligase (872 aa).

Residues proline 46 to histidine 56 carry the 'HIGH' region motif. Positions lysine 523–serine 527 match the 'KMSKS' region motif. Lysine 526 contributes to the ATP binding site. The stretch at isoleucine 796–aspartate 872 forms a coiled coil.

The protein belongs to the class-I aminoacyl-tRNA synthetase family. ValS type 1 subfamily. As to quaternary structure, monomer.

It is found in the cytoplasm. The enzyme catalyses tRNA(Val) + L-valine + ATP = L-valyl-tRNA(Val) + AMP + diphosphate. In terms of biological role, catalyzes the attachment of valine to tRNA(Val). As ValRS can inadvertently accommodate and process structurally similar amino acids such as threonine, to avoid such errors, it has a 'posttransfer' editing activity that hydrolyzes mischarged Thr-tRNA(Val) in a tRNA-dependent manner. This is Valine--tRNA ligase from Mycoplasma mycoides subsp. mycoides SC (strain CCUG 32753 / NCTC 10114 / PG1).